The primary structure comprises 304 residues: Probable aspartoacylase (304 aa).

Histidine 13 and glutamate 16 together coordinate Zn(2+). Residues arginine 55 and 62–63 contribute to the substrate site; that span reads NR. Histidine 104 contacts Zn(2+). Residues glutamate 162 and tyrosine 272 each coordinate substrate.

The protein belongs to the AspA/AstE family. Aspartoacylase subfamily. It depends on Zn(2+) as a cofactor.

The catalysed reaction is an N-acyl-L-aspartate + H2O = a carboxylate + L-aspartate. The sequence is that of Probable aspartoacylase from Synechococcus sp. (strain CC9605).